The chain runs to 503 residues: MGQIVTLIQSIPEVLQEVFNVALIIVSVLCIVKGFVNLMRCGLFQLVTFLILSGRSCDSMMIDRRHNLTHVEFNLTRMFDNLPQSCSKNNTHHYYKGPSNTTWGIELTLTNTSIANETSGNFSNIGSLGYGNISNCDRTREAGHTLKWLLNELHFNVLHVTRHIGARCKTVEGAGVLIQYNLTVGDRGGEVGRHLIASLAQIIGDPKIAWVGKCFNNCSGDTCRLTNCEGGTHYNFLIIQNTTWENHCTYTPMATIRMALQRTAYSSVSRKLLGFFTWDLSDSSGQHVPGGYCLEQWAIIWAGIKCFDNTVMAKCNKDHNEEFCDTMRLFDFNQNAIKTLQLNVENSLNLFKKTINGLISDSLVIRNSLKQLAKIPYCNYTKFWYINDTITGRHSLPQCWLVHNGSYLNETHFKNDWLWESQNLYNEMLMKEYEERQGKTPLALTDICFWSLVFYTITVFLHIVGIPTHRHIIGDGCPKPHRITRNSLCSCGYYKYQRNLTNG.

G2 carries N-myristoyl glycine; by host lipidation. Residues 2–17 (GQIVTLIQSIPEVLQE) are Extracellular-facing. Residues 18–33 (VFNVALIIVSVLCIVK) form a helical membrane-spanning segment. Residues 34–58 (GFVNLMRCGLFQLVTFLILSGRSCD) lie on the Cytoplasmic side of the membrane. C57 is a binding site for Zn(2+). The Extracellular segment spans residues 59–446 (SMMIDRRHNL…QGKTPLALTD (388 aa)). 4 cysteine pairs are disulfide-bonded: C86–C248, C293–C306, C315–C324, and C378–C399. N89, N111, N181, and N241 each carry an N-linked (GlcNAc...) asparagine; by host glycan. N379, N387, N404, and N409 each carry an N-linked (GlcNAc...) asparagine; by host glycan. Residues 447–467 (ICFWSLVFYTITVFLHIVGIP) form a helical membrane-spanning segment. At 468–503 (THRHIIGDGCPKPHRITRNSLCSCGYYKYQRNLTNG) the chain is on the cytoplasmic side. Positions 469, 471, 477, 481, 489, and 491 each coordinate Zn(2+).

The protein belongs to the arenaviridae GPC protein family. In terms of assembly, interacts with glycoprotein G2. Part of the GP complex (GP-C) together with glycoprotein G1 and glycoprotein G2. The GP-complex interacts with protein Z, which interacts with ribonucleocapsid; these interactions may induce virion budding. Homotrimer; disulfide-linked. In pre-fusion state, G1 homotrimers bind G2 homotrimers via ionic interactions. Part of the GP complex (GP-C) together with glycoprotein G2 and the stable signal peptide. The GP-complex interacts with protein Z, which interacts with ribonucleocapsid; these interactions may induce virion budding. As to quaternary structure, homotrimer. Interacts with the stable signal peptide. In pre-fusion state, G2 homotrimers bind G1 homotrimers via ionic interactions. Part of the GP complex (GP-C) together with glycoprotein G1 and the stable signal peptide. Acidification in the endosome triggers rearrangements, which ultimately leads to a 6 helix bundle formed by the two heptad repeat domains (HR1 and HR2) in post-fusion state. The GP-complex interacts with protein Z, which interacts with ribonucleocapsid; these interactions may induce virion budding. Specific enzymatic cleavages in vivo yield mature proteins. GP-C polyprotein is cleaved in the endoplasmic reticulum by the host protease MBTPS1. Only cleaved glycoprotein is incorporated into virions. In terms of processing, the SSP remains stably associated with the GP complex following cleavage by signal peptidase and plays crucial roles in the trafficking of GP through the secretory pathway. Post-translationally, myristoylation is necessary for GP2-mediated fusion activity.

Its subcellular location is the virion membrane. The protein localises to the host endoplasmic reticulum membrane. It localises to the host Golgi apparatus membrane. It is found in the host cell membrane. Functions as a cleaved signal peptide that is retained as the third component of the GP complex (GP-C). Helps to stabilize the spike complex in its native conformation. The SSP is required for efficient glycoprotein expression, post-translational maturation cleavage of G1 and G2, glycoprotein transport to the cell surface plasma membrane, formation of infectious virus particles, and acid pH-dependent glycoprotein-mediated cell fusion. In terms of biological role, forms the virion spikes together with glycoprotein G2. The glycoprotein spike trimers are connected to the underlying matrix. Interacts with the host receptor leading to virus endocytosis. Its function is as follows. Forms the virion spikes together with glycoprotein G1. The glycoprotein spike trimers are connected to the underlying matrix. Class I viral fusion protein that directs fusion of viral and host endosomal membranes, leading to delivery of the nucleocapsid into the cytoplasm. Membrane fusion is mediated by irreversible conformational changes induced by acidification. This is Pre-glycoprotein polyprotein GP complex from Cavia cutleri (Guinea pig).